Here is a 146-residue protein sequence, read N- to C-terminus: 3-hydroxyacyl-[acyl-carrier-protein] dehydratase FabZ (146 aa).

Residue histidine 49 is part of the active site.

The protein belongs to the thioester dehydratase family. FabZ subfamily.

The protein localises to the cytoplasm. It carries out the reaction a (3R)-hydroxyacyl-[ACP] = a (2E)-enoyl-[ACP] + H2O. Its function is as follows. Involved in unsaturated fatty acids biosynthesis. Catalyzes the dehydration of short chain beta-hydroxyacyl-ACPs and long chain saturated and unsaturated beta-hydroxyacyl-ACPs. The protein is 3-hydroxyacyl-[acyl-carrier-protein] dehydratase FabZ of Pseudomonas aeruginosa (strain LESB58).